We begin with the raw amino-acid sequence, 435 residues long: Protoheme IX farnesyltransferase, mitochondrial (435 aa).

Residues 1–35 (MPALCATYLIHSGNLRACLRIVPLTKPSVVIAYRH) constitute a mitochondrion transit peptide. A run of 6 helical transmembrane segments spans residues 135–155 (VLVM…ATVL), 157–177 (LLSL…INMG), 212–232 (GVIG…LLGA), 250–270 (IINT…GWAA), 324–344 (VALR…YYGI), and 401–421 (FWVS…HKKG).

Belongs to the UbiA prenyltransferase family.

Its subcellular location is the mitochondrion membrane. In terms of biological role, converts protoheme IX and farnesyl diphosphate to heme O. This is Protoheme IX farnesyltransferase, mitochondrial (COX10) from Eremothecium gossypii (strain ATCC 10895 / CBS 109.51 / FGSC 9923 / NRRL Y-1056) (Yeast).